We begin with the raw amino-acid sequence, 136 residues long: Large ribosomal subunit protein eL27 (136 aa).

The region spanning 5–40 (MKPGKVVMVLAGRYAGRKAVIVKNIDDGTADRPYSH) is the KOW domain.

This sequence belongs to the eukaryotic ribosomal protein eL27 family. In terms of assembly, component of the large ribosomal subunit.

The protein localises to the cytoplasm. It localises to the cytosol. It is found in the rough endoplasmic reticulum. Its function is as follows. Component of the large ribosomal subunit. The polypeptide is Large ribosomal subunit protein eL27 (rpl27) (Hippocampus comes (Tiger tail seahorse)).